A 67-amino-acid polypeptide reads, in one-letter code: Small ribosomal subunit protein eS17 (67 aa).

It belongs to the eukaryotic ribosomal protein eS17 family.

This is Small ribosomal subunit protein eS17 from Pyrococcus abyssi (strain GE5 / Orsay).